The chain runs to 468 residues: Lipase 1 (468 aa).

An N-terminal signal peptide occupies residues 1 to 16 (MRGIAVFLAFISLIFA). Residue N79 is glycosylated (N-linked (GlcNAc...) asparagine). C112 and C285 are joined by a disulfide. Residue S196 is the Charge relay system of the active site. Residues N231 and N319 are each glycosylated (N-linked (GlcNAc...) asparagine). Residues D348 and H381 each act as charge relay system in the active site. Residues C364 and C409 are joined by a disulfide bond. N417, N422, and N451 each carry an N-linked (GlcNAc...) asparagine glycan.

Belongs to the AB hydrolase superfamily. Lipase family. Class Lip subfamily.

The protein localises to the secreted. The enzyme catalyses a triacylglycerol + H2O = a diacylglycerol + a fatty acid + H(+). In terms of biological role, secreted lipase that is able to hydrolyze both the neutral triacylglycerols and the monopalmitate ester Tween 40, allowing the use of hydrolyzed products as carbon sources. Has broad lipolytic activity, which may be important for colonization and subsequent infection, therefore contributing to the persistence and virulence in human tissue. The polypeptide is Lipase 1 (Candida albicans (strain SC5314 / ATCC MYA-2876) (Yeast)).